A 350-amino-acid chain; its full sequence is UDP-N-acetylenolpyruvoylglucosamine reductase (350 aa).

The FAD-binding PCMH-type domain maps to H24–L195. Residue R172 is part of the active site. S245 acts as the Proton donor in catalysis. E342 is a catalytic residue.

The protein belongs to the MurB family. Requires FAD as cofactor.

It is found in the cytoplasm. It catalyses the reaction UDP-N-acetyl-alpha-D-muramate + NADP(+) = UDP-N-acetyl-3-O-(1-carboxyvinyl)-alpha-D-glucosamine + NADPH + H(+). It participates in cell wall biogenesis; peptidoglycan biosynthesis. In terms of biological role, cell wall formation. The sequence is that of UDP-N-acetylenolpyruvoylglucosamine reductase from Xanthomonas oryzae pv. oryzae (strain MAFF 311018).